A 685-amino-acid chain; its full sequence is DNA-directed RNA polymerase subunit beta' (685 aa).

Positions 69, 71, 87, and 90 each coordinate Zn(2+). The Mg(2+) site is built by D489, D491, and D493.

Belongs to the RNA polymerase beta' chain family. RpoC1 subfamily. As to quaternary structure, in plastids the minimal PEP RNA polymerase catalytic core is composed of four subunits: alpha, beta, beta', and beta''. When a (nuclear-encoded) sigma factor is associated with the core the holoenzyme is formed, which can initiate transcription. Requires Mg(2+) as cofactor. Zn(2+) serves as cofactor.

The protein localises to the plastid. Its subcellular location is the chloroplast. It carries out the reaction RNA(n) + a ribonucleoside 5'-triphosphate = RNA(n+1) + diphosphate. Functionally, DNA-dependent RNA polymerase catalyzes the transcription of DNA into RNA using the four ribonucleoside triphosphates as substrates. This chain is DNA-directed RNA polymerase subunit beta', found in Gossypium hirsutum (Upland cotton).